Here is a 286-residue protein sequence, read N- to C-terminus: 5'-3' exonuclease (286 aa).

One can recognise a 5'-3' exonuclease domain in the interval 172–270; sequence IKPKEFIDFL…IKLKDIILKK (99 aa).

Its function is as follows. 5'-3' exonuclease acting preferentially on double-stranded DNA. This is 5'-3' exonuclease from Buchnera aphidicola subsp. Acyrthosiphon pisum (strain APS) (Acyrthosiphon pisum symbiotic bacterium).